The chain runs to 95 residues: RING finger protein Z (95 aa).

Residue Gly2 is the site of N-myristoyl glycine; by host attachment. An RING-type; atypical zinc finger spans residues 38–74 (CKSCWFANRGLIACSDHYLCLNCLTRLRSQSQFCGIC). Residues 88 to 91 (PSAP) carry the PTAP/PSAP motif motif.

It belongs to the arenaviridae Z protein family. Interacts with protein NP; this interaction probably directs the encapsidated genome to budding sites. Interacts (via RING domain) with polymerase L; this interaction inhibits viral transcription and replication, Z partially blocks the product exit tunnel for the releasing nascent RNA product. Interacts with the glycoprotein complex; this interaction plays a role in virion budding. Interacts with host eIF4E; this interaction results in eIF4E reduced affinity for its substrate, the 5'-m7 G cap structure. Interacts (via late-budding domain) with host TSG101; this interaction is essential for budding and release of viral particles. Interacts with host RPLP0; this interaction may serve to load ribosome-like particles inside the virion. Interacts with host PML; this interaction induces PML bodies redistribution in the cytoplasm upon viral infection. In terms of processing, myristoylation is required for the role of RING finger protein Z in assembly and budding.

It is found in the virion. The protein resides in the host cytoplasm. Its subcellular location is the host perinuclear region. It localises to the host cell membrane. Its function is as follows. Plays a crucial role in virion assembly and budding. Expressed late in the virus life cycle, it acts as an inhibitor of viral transcription and RNA synthesis by interacting with the viral polymerase L. Presumably recruits the NP encapsidated genome to cellular membranes at budding sites via direct interaction with NP. Plays critical roles in the final steps of viral release by interacting with host TSG101, a member of the vacuolar protein-sorting pathway and using other cellular host proteins involved in vesicle formation pathway. The budding of the virus progeny occurs after association of protein Z with the viral glycoprotein complex SSP-GP1-GP2 at the cell periphery, step that requires myristoylation of protein Z. Also selectively represses protein production by associating with host eIF4E. In cell-based minigenome assay, has an inhibitory effect on the ribonucleoprotein machinery (vRNP), which is responsible for the replication and transcription of the viral genome. The sequence is that of RING finger protein Z from Pirital mammarenavirus (isolate Rat/Venezuela/VAV-488/1995) (PIRV).